A 384-amino-acid polypeptide reads, in one-letter code: MLGTEELIQIRHHLHQIPELALQETETHAYLMEVIGKMEQDHLEILEPEDLPTAILVRVNGTAPVRTIGYRTDIDALPVQEETGLPYASTHSGVMHACGHDVHMTVALGVLDYFASHQPKDNLLFFFQPAEESEAGGQRAYELGLFEGKWRPDEFYGLHDNPALKTGVIGCRLGTLFAGTTEVDIDVLGKDGHAAFPQEANDAVVAAAALIMQVQTIISRSINPVEAGVITLGKLEAGTIRNVIAGHARIEGTIRGLTQEMIETIDRRLQDVCEGIAKSFGVTVNLALNQGGYLPVENDPALTKRFINFMQNNPAVDYVETAPAMTGEDFGYLLSKFPGTMFWLGVEDDAQLHQATLTPNEGAIQKGIDALTSFITYRSQAEED.

Asp73 is a catalytic residue. The active-site Proton acceptor is the Glu132.

The protein belongs to the peptidase M20A family. N-acetyldiaminopimelate deacetylase subfamily.

The catalysed reaction is N-acetyl-(2S,6S)-2,6-diaminopimelate + H2O = (2S,6S)-2,6-diaminopimelate + acetate. It participates in amino-acid biosynthesis; L-lysine biosynthesis via DAP pathway; LL-2,6-diaminopimelate from (S)-tetrahydrodipicolinate (acetylase route): step 3/3. Functionally, catalyzes the conversion of N-acetyl-diaminopimelate to diaminopimelate and acetate. The protein is N-acetyldiaminopimelate deacetylase of Limosilactobacillus fermentum (strain NBRC 3956 / LMG 18251) (Lactobacillus fermentum).